The chain runs to 445 residues: Tubulin beta-3 chain (445 aa).

The short motif at 1 to 4 is the MREI motif element; that stretch reads MREI. GTP is bound by residues Q11, E69, S138, G142, T143, G144, N204, and N226. Residue E69 participates in Mg(2+) binding. The tract at residues 425–445 is disordered; sequence YQDATAEEEGEFEEEAEEEAE. Residues 429–445 are compositionally biased toward acidic residues; the sequence is TAEEEGEFEEEAEEEAE. E438 is subject to 5-glutamyl polyglutamate.

It belongs to the tubulin family. Dimer of alpha and beta chains. A typical microtubule is a hollow water-filled tube with an outer diameter of 25 nm and an inner diameter of 15 nM. Alpha-beta heterodimers associate head-to-tail to form protofilaments running lengthwise along the microtubule wall with the beta-tubulin subunit facing the microtubule plus end conferring a structural polarity. Microtubules usually have 13 protofilaments but different protofilament numbers can be found in some organisms and specialized cells. Requires Mg(2+) as cofactor. In terms of processing, some glutamate residues at the C-terminus are polyglycylated, resulting in polyglycine chains on the gamma-carboxyl group. Glycylation is mainly limited to tubulin incorporated into axonemes (cilia and flagella) whereas glutamylation is prevalent in neuronal cells, centrioles, axonemes, and the mitotic spindle. Both modifications can coexist on the same protein on adjacent residues, and lowering polyglycylation levels increases polyglutamylation, and reciprocally. The precise function of polyglycylation is still unclear. Post-translationally, some glutamate residues at the C-terminus are polyglutamylated, resulting in polyglutamate chains on the gamma-carboxyl group. Polyglutamylation plays a key role in microtubule severing by spastin (SPAST). SPAST preferentially recognizes and acts on microtubules decorated with short polyglutamate tails: severing activity by SPAST increases as the number of glutamates per tubulin rises from one to eight, but decreases beyond this glutamylation threshold. As to expression, highly expressed in testis.

It localises to the cytoplasm. It is found in the cytoskeleton. Its function is as follows. Tubulin is the major constituent of microtubules, a cylinder consisting of laterally associated linear protofilaments composed of alpha- and beta-tubulin heterodimers. Microtubules grow by the addition of GTP-tubulin dimers to the microtubule end, where a stabilizing cap forms. Below the cap, tubulin dimers are in GDP-bound state, owing to GTPase activity of alpha-tubulin. TUBB3 plays a role in dorsal root ganglion axon projection towards the spinal cord. The protein is Tubulin beta-3 chain of Gallus gallus (Chicken).